Reading from the N-terminus, the 443-residue chain is Ribosomal protein uS12 methylthiotransferase RimO (443 aa).

Positions 10-120 (PRVGFVSLGC…VVKAVHQHLP (111 aa)) constitute an MTTase N-terminal domain. [4Fe-4S] cluster is bound by residues cysteine 19, cysteine 55, cysteine 84, cysteine 151, cysteine 155, and cysteine 158. In terms of domain architecture, Radical SAM core spans 137 to 375 (LTPAHYAYLK…DFQEDISTQR (239 aa)). In terms of domain architecture, TRAM spans 377–443 (ERWIGRDITV…VHDLYARPLP (67 aa)).

Belongs to the methylthiotransferase family. RimO subfamily. Requires [4Fe-4S] cluster as cofactor.

The protein localises to the cytoplasm. The enzyme catalyses L-aspartate(89)-[ribosomal protein uS12]-hydrogen + (sulfur carrier)-SH + AH2 + 2 S-adenosyl-L-methionine = 3-methylsulfanyl-L-aspartate(89)-[ribosomal protein uS12]-hydrogen + (sulfur carrier)-H + 5'-deoxyadenosine + L-methionine + A + S-adenosyl-L-homocysteine + 2 H(+). Functionally, catalyzes the methylthiolation of an aspartic acid residue of ribosomal protein uS12. The protein is Ribosomal protein uS12 methylthiotransferase RimO of Aromatoleum aromaticum (strain DSM 19018 / LMG 30748 / EbN1) (Azoarcus sp. (strain EbN1)).